A 230-amino-acid polypeptide reads, in one-letter code: Ribonuclease 3 (230 aa).

In terms of domain architecture, RNase III spans 5–125; that stretch reads YSRFYNILGY…VIGAIYLDSD (121 aa). Glu-40 serves as a coordination point for Mg(2+). Residue Asp-44 is part of the active site. Residues Asp-111 and Glu-114 each contribute to the Mg(2+) site. Glu-114 is an active-site residue. Positions 153–223 constitute a DRBM domain; that stretch reads DSKSKLQEIL…AEKMIEMLSQ (71 aa).

It belongs to the ribonuclease III family. As to quaternary structure, homodimer. It depends on Mg(2+) as a cofactor.

Its subcellular location is the cytoplasm. It catalyses the reaction Endonucleolytic cleavage to 5'-phosphomonoester.. Functionally, digests double-stranded RNA. Involved in the processing of primary rRNA transcript to yield the immediate precursors to the large and small rRNAs (23S and 16S). Processes some mRNAs, and tRNAs when they are encoded in the rRNA operon. Processes pre-crRNA and tracrRNA of type II CRISPR loci if present in the organism. The chain is Ribonuclease 3 from Francisella tularensis subsp. tularensis (strain WY96-3418).